Consider the following 174-residue polypeptide: Ribosome maturation factor RimM (174 aa).

One can recognise a PRC barrel domain in the interval 98–171 (EDEYYFHEII…TIKIHIMEGL (74 aa)).

The protein belongs to the RimM family. As to quaternary structure, binds ribosomal protein uS19.

The protein resides in the cytoplasm. In terms of biological role, an accessory protein needed during the final step in the assembly of 30S ribosomal subunit, possibly for assembly of the head region. Essential for efficient processing of 16S rRNA. May be needed both before and after RbfA during the maturation of 16S rRNA. It has affinity for free ribosomal 30S subunits but not for 70S ribosomes. The protein is Ribosome maturation factor RimM of Bacillus licheniformis (strain ATCC 14580 / DSM 13 / JCM 2505 / CCUG 7422 / NBRC 12200 / NCIMB 9375 / NCTC 10341 / NRRL NRS-1264 / Gibson 46).